Consider the following 210-residue polypeptide: Thymidylate kinase (210 aa).

Residue 10 to 17 (GLEGAGKT) participates in ATP binding.

This sequence belongs to the thymidylate kinase family.

It catalyses the reaction dTMP + ATP = dTDP + ADP. Its function is as follows. Phosphorylation of dTMP to form dTDP in both de novo and salvage pathways of dTTP synthesis. This is Thymidylate kinase from Erwinia tasmaniensis (strain DSM 17950 / CFBP 7177 / CIP 109463 / NCPPB 4357 / Et1/99).